The following is a 316-amino-acid chain: Acetyl-coenzyme A carboxylase carboxyl transferase subunit beta, chloroplastic (316 aa).

The region spanning 47–316 (LWTRCDNCEN…CKKFQNSFFK (270 aa)) is the CoA carboxyltransferase N-terminal domain. Zn(2+) contacts are provided by Cys51, Cys54, Cys70, and Cys73. The C4-type zinc finger occupies 51 to 73 (CDNCENMLYVRFLRQNKRICEEC).

Belongs to the AccD/PCCB family. Acetyl-CoA carboxylase is a heterohexamer composed of biotin carboxyl carrier protein, biotin carboxylase and 2 subunits each of ACCase subunit alpha and ACCase plastid-coded subunit beta (accD). Requires Zn(2+) as cofactor.

Its subcellular location is the plastid. It localises to the chloroplast stroma. The enzyme catalyses N(6)-carboxybiotinyl-L-lysyl-[protein] + acetyl-CoA = N(6)-biotinyl-L-lysyl-[protein] + malonyl-CoA. Its pathway is lipid metabolism; malonyl-CoA biosynthesis; malonyl-CoA from acetyl-CoA: step 1/1. Functionally, component of the acetyl coenzyme A carboxylase (ACC) complex. Biotin carboxylase (BC) catalyzes the carboxylation of biotin on its carrier protein (BCCP) and then the CO(2) group is transferred by the transcarboxylase to acetyl-CoA to form malonyl-CoA. The sequence is that of Acetyl-coenzyme A carboxylase carboxyl transferase subunit beta, chloroplastic from Marchantia polymorpha (Common liverwort).